A 211-amino-acid chain; its full sequence is Urease accessory protein UreG (211 aa).

Gly12 to Thr19 contacts GTP.

Belongs to the SIMIBI class G3E GTPase family. UreG subfamily. In terms of assembly, homodimer. UreD, UreF and UreG form a complex that acts as a GTP-hydrolysis-dependent molecular chaperone, activating the urease apoprotein by helping to assemble the nickel containing metallocenter of UreC. The UreE protein probably delivers the nickel.

Its subcellular location is the cytoplasm. Functionally, facilitates the functional incorporation of the urease nickel metallocenter. This process requires GTP hydrolysis, probably effectuated by UreG. In Paracoccus denitrificans (strain Pd 1222), this protein is Urease accessory protein UreG.